A 1849-amino-acid chain; its full sequence is Protein virilizer (1849 aa).

Composition is skewed to basic and acidic residues over residues 206–219, 242–265, 281–291, 332–347, and 785–818; these read QHYH…QREM, THSE…DWSR, RSRSDADEHKW, HSSE…EERS, and VEAK…AAEE. 6 disordered regions span residues 206-364, 783-818, 1557-1584, 1666-1686, 1715-1782, and 1798-1849; these read QHYH…DEII, RVVE…AAEE, SASM…SSSG, GESK…EMTP, RGRG…NRGS, and IGSP…PYLR. Residues 1671-1684 show a composition bias toward polar residues; the sequence is TLNLSGSPQSNREM. Residues 1732–1742 are compositionally biased toward low complexity; sequence SRPPNTSRPPS. Residues 1800-1818 are compositionally biased toward polar residues; it reads SPSSWTESGGGSYRSTSES.

Belongs to the vir family. In terms of assembly, component of the WMM complex, a N6-methyltransferase complex composed of a catalytic subcomplex, named MAC, and of an associated subcomplex, named MACOM. The MAC subcomplex is composed of Ime4/Mettl3 and Mettl14. The MACOM subcomplex is composed of fl(2)d, Flacc/Xio, Hakai, vir, and, in some cases of nito. Part of a complex containing fl(2)d, Sxl and vir.

It is found in the nucleus. Its function is as follows. Associated component of the WMM complex, a complex that mediates N6-methyladenosine (m6A) methylation of mRNAs, a modification that plays a role in the efficiency of mRNA splicing and is required for sex determination. Required for sex determination and dosage compensation via Sxl alternative splicing: m6A methylation acts as a key regulator of Sxl pre-mRNA and promotes female-specific alternative splicing of Sxl, which determines female physiognomy. M6A methylation is also required for neuronal functions. Required for proper inclusion of regulated exons in Ubx transcripts, leading to isoforms Ia/b and IIa/b. The polypeptide is Protein virilizer (vir) (Drosophila pseudoobscura pseudoobscura (Fruit fly)).